The primary structure comprises 72 residues: UPF0154 protein BPUM_1692 (72 aa).

A helical transmembrane segment spans residues 4–24 (WVVILVGVVALLAGVALGFFI).

This sequence belongs to the UPF0154 family.

It is found in the cell membrane. The protein is UPF0154 protein BPUM_1692 of Bacillus pumilus (strain SAFR-032).